The chain runs to 280 residues: Movement protein (280 aa).

Residues E248–S267 are disordered. The segment covering E255–S267 has biased composition (low complexity).

Belongs to the cucumovirus movement protein family.

It is found in the host cell junction. Its subcellular location is the host plasmodesma. Functionally, transports viral genome to neighboring plant cells directly through plasmosdesmata, without any budding. The movement protein allows efficient cell to cell propagation, by bypassing the host cell wall barrier. Acts by forming a tubular structure at the host plasmodesmata, enlarging it enough to allow free passage of virion capsids. This chain is Movement protein, found in Cucumis sativus (Cucumber).